A 346-amino-acid chain; its full sequence is uncharacterized protein (346 aa).

The helical transmembrane segment at 16–36 threads the bilayer; the sequence is ILGIIICIILIVGFFISFDST.

Its subcellular location is the membrane. This is an uncharacterized protein from Methanocaldococcus jannaschii (strain ATCC 43067 / DSM 2661 / JAL-1 / JCM 10045 / NBRC 100440) (Methanococcus jannaschii).